The following is a 353-amino-acid chain: Peptide methionine sulfoxide reductase MsrA/MsrB (353 aa).

Positions Arg-43–Thr-196 are peptide methionine sulfoxide reductase A. Residue Cys-51 is part of the active site. A MsrB domain is found at Asp-213 to Leu-336. The Nucleophile role is filled by Cys-325.

The protein in the N-terminal section; belongs to the MsrA Met sulfoxide reductase family. It in the C-terminal section; belongs to the MsrB Met sulfoxide reductase family.

It catalyses the reaction L-methionyl-[protein] + [thioredoxin]-disulfide + H2O = L-methionyl-(S)-S-oxide-[protein] + [thioredoxin]-dithiol. The catalysed reaction is [thioredoxin]-disulfide + L-methionine + H2O = L-methionine (S)-S-oxide + [thioredoxin]-dithiol. The enzyme catalyses L-methionyl-[protein] + [thioredoxin]-disulfide + H2O = L-methionyl-(R)-S-oxide-[protein] + [thioredoxin]-dithiol. Its function is as follows. Has an important function as a repair enzyme for proteins that have been inactivated by oxidation. Catalyzes the reversible oxidation-reduction of methionine sulfoxide in proteins to methionine. The sequence is that of Peptide methionine sulfoxide reductase MsrA/MsrB (msrAB) from Haemophilus influenzae (strain ATCC 51907 / DSM 11121 / KW20 / Rd).